Here is a 267-residue protein sequence, read N- to C-terminus: Undecaprenyl-diphosphatase (267 aa).

Transmembrane regions (helical) follow at residues 1–21 (MTLW…FLPI), 39–59 (AGVA…LFYY), 85–105 (AKLG…GFMV), 117–137 (LLIA…DFWG), 189–209 (FSFL…LWKL), 220–240 (LIAL…ALFI), and 246–266 (VGMM…FFVF).

It belongs to the UppP family.

The protein resides in the cell inner membrane. It catalyses the reaction di-trans,octa-cis-undecaprenyl diphosphate + H2O = di-trans,octa-cis-undecaprenyl phosphate + phosphate + H(+). In terms of biological role, catalyzes the dephosphorylation of undecaprenyl diphosphate (UPP). Confers resistance to bacitracin. This Dichelobacter nodosus (strain VCS1703A) protein is Undecaprenyl-diphosphatase.